A 293-amino-acid chain; its full sequence is 4-hydroxy-tetrahydrodipicolinate synthase (293 aa).

Residue threonine 47 participates in pyruvate binding. Residue tyrosine 136 is the Proton donor/acceptor of the active site. Lysine 164 serves as the catalytic Schiff-base intermediate with substrate. Isoleucine 206 provides a ligand contact to pyruvate.

It belongs to the DapA family. Homotetramer; dimer of dimers.

Its subcellular location is the cytoplasm. It catalyses the reaction L-aspartate 4-semialdehyde + pyruvate = (2S,4S)-4-hydroxy-2,3,4,5-tetrahydrodipicolinate + H2O + H(+). The protein operates within amino-acid biosynthesis; L-lysine biosynthesis via DAP pathway; (S)-tetrahydrodipicolinate from L-aspartate: step 3/4. Functionally, catalyzes the condensation of (S)-aspartate-beta-semialdehyde [(S)-ASA] and pyruvate to 4-hydroxy-tetrahydrodipicolinate (HTPA). The sequence is that of 4-hydroxy-tetrahydrodipicolinate synthase from Listeria monocytogenes serotype 4a (strain HCC23).